A 284-amino-acid polypeptide reads, in one-letter code: Bifunctional protein FolD (284 aa).

NADP(+) contacts are provided by residues 166–168 and I232; that span reads GAS.

It belongs to the tetrahydrofolate dehydrogenase/cyclohydrolase family. In terms of assembly, homodimer.

The enzyme catalyses (6R)-5,10-methylene-5,6,7,8-tetrahydrofolate + NADP(+) = (6R)-5,10-methenyltetrahydrofolate + NADPH. It catalyses the reaction (6R)-5,10-methenyltetrahydrofolate + H2O = (6R)-10-formyltetrahydrofolate + H(+). The protein operates within one-carbon metabolism; tetrahydrofolate interconversion. Its function is as follows. Catalyzes the oxidation of 5,10-methylenetetrahydrofolate to 5,10-methenyltetrahydrofolate and then the hydrolysis of 5,10-methenyltetrahydrofolate to 10-formyltetrahydrofolate. The polypeptide is Bifunctional protein FolD (Shewanella pealeana (strain ATCC 700345 / ANG-SQ1)).